Consider the following 260-residue polypeptide: Protein phosphatase 1 regulatory subunit 35 (260 aa).

Residues 1–100 form a disordered region; sequence MMGFGASALE…PLLVAGAPGD (100 aa). Phosphoserine is present on residues Ser-46 and Ser-53. The segment covering 64 to 76 has biased composition (basic residues); that stretch reads RKGRRGGSRRGRQ.

It belongs to the PPP1R35 family. In terms of assembly, interacts with PPP1CA; this interaction mediates the PPP1CA phosphatase activity inhibition. Interacts with RTTN; this interaction allows the mutual recruitment to the centriole.

It localises to the cytoplasm. It is found in the cytoskeleton. The protein localises to the microtubule organizing center. Its subcellular location is the centrosome. The protein resides in the centriole. Functionally, during centriole duplication, plays a role in the centriole elongation by promoting the recruitment of the microtubule-binding elongation machinery through its interaction with TTTN, leading to the centriole to centrosome conversion. In addition may play a role in the primary cilia assembly. The protein is Protein phosphatase 1 regulatory subunit 35 of Mus musculus (Mouse).